The following is a 499-amino-acid chain: MELEKFKPWRDSHSEHIPVPLTSRQNIIIILLILFSHYHHWYWRCRRPTDRWSLLAVCHKHHQRAPNSLPTSKSLHSFLHSARGWNSWGIQATPNTIPSYPKEELGRVLNQKFIISQCTMLTDPATQDAGYDLCSLDGGWYSSITDKFGCITYNASLFDISALSRYLHGKGLRMGLYSQPGTPCKARHGTNVTVGSAFIDHVDKNNNCYFDYENPNTQLYRELITLWVSWGVDMIKLDYVTPGSTFQDTCMPGNLNASAIAYHCAIEKSGRKFQLDVSSDVCRSQPYWGTWNSNADSIRVDTDINPYDSDDFFFFYMQHCTVEDYRQFVNLQVVDAQNDKPVTLRGNLDNLFVGNPAKVKGVTDKQRNTLMRIWIGASSNLFLGSDMRILDDLGRWLITSPSSIAAADFCAMYPMQPRNPGTGSNQAVQLQACITGPSEHGEAYVLLTNLGPNLGDGGYVTVGGGEQKMSVTLADMGPSRSSANRLDLSPRPIHVLILL.

Asn-154 and Asn-191 each carry an N-linked (GlcNAc...) asparagine glycan. Residue Asp-238 is the Nucleophile of the active site. An N-linked (GlcNAc...) asparagine glycan is attached at Asn-256. Asp-303 serves as the catalytic Proton donor.

This sequence belongs to the glycosyl hydrolase 27 family.

It is found in the secreted. It carries out the reaction Hydrolysis of terminal, non-reducing alpha-D-galactose residues in alpha-D-galactosides, including galactose oligosaccharides, galactomannans and galactolipids.. Functionally, putative alpha-galactosidase involved in the degradation of simple oligosaccharides like melibiose, raffinose and stachyose, and of polymeric galacto(gluco)mannans. The sequence is that of Putative alpha-galactosidase 8 (agl8) from Emericella nidulans (strain FGSC A4 / ATCC 38163 / CBS 112.46 / NRRL 194 / M139) (Aspergillus nidulans).